The sequence spans 663 residues: Beta-galactosidase BgaH (663 aa).

Arginine 103 contributes to the substrate binding site. Zn(2+) is bound at residue cysteine 107. A substrate-binding site is contributed by asparagine 141. Glutamate 142 serves as the catalytic Proton donor. Zn(2+) is bound by residues cysteine 151, cysteine 153, and cysteine 156. Glutamate 311 serves as the catalytic Nucleophile. Substrate contacts are provided by residues tryptophan 319 and 359-362 (EQYH).

Belongs to the glycosyl hydrolase 42 family. In terms of assembly, homodimer.

The enzyme catalyses Hydrolysis of terminal non-reducing beta-D-galactose residues in beta-D-galactosides.. With respect to regulation, requires 4 M NaCl for maximal activity. Loss of activity if DTT or beta-mercaptoethanol is omitted from buffers. Addition of 5-20 mM EDTA, 1 mM Cu(2+) or 1 mM Zn(2+) results in loss of activity. Its function is as follows. When overexpressed, cleaves several different substrates including o-nitrophenyl-beta-D-galactopyranoside (ONPG), chromogen 5-bromo-4-chloro-3-indolyl-beta-D-galactopyranoside (X-Gal) and lactulose, but not lactose. Also has beta-D-fucosidase activity. No beta-L-fucosidase, beta-glucosidase, beta-arabinosidase or beta-xylosidase activity. This is Beta-galactosidase BgaH from Haloferax lucentense (strain DSM 14919 / JCM 9276 / NCIMB 13854 / Aa 2.2) (Haloferax alicantei).